Reading from the N-terminus, the 901-residue chain is MLIKLLTKVFGSRNDRTLRRMRKVVNIINAMEPEMEKLSDEELKGKTAEFRARLEKGEVLENLIPEAFAVVREASKRVFGMRHFDVQLLGGMVLNERCIAEMRTGEGKTLTATLPAYLNALTGKGVHVVTVNDYLAQRDAENNRPLFEFLGLTVGINLPGMPAPAKREAYAADITYGTNNEYGFDYLRDNMAFSPEERVQRKLHYALVDEVDSILIDEARTPLIISGPAEDSSEMYKRVNKIIPHLIRQEKEDSETFQGEGHFSVDEKSRQVNLTERGLVLIEELLVKEGIMDEGESLYSPANIMLMHHVTAALRAHALFTRDVDYIVKDGEVIIVDEHTGRTMQGRRWSDGLHQAVEAKEGVQIQNENQTLASITFQNYFRLYEKLAGMTGTADTEAFEFSSIYKLDTVVVPTNRPMIRKDLPDLVYMTEAEKIQAIIEDIKERTAKGQPVLVGTISIEKSELVSNELTKAGIKHNVLNAKFHANEAAIVAQAGYPAAVTIATNMAGRGTDIVLGGSWQAEVAALENPTVEQIEKIKADWQVRHDAVLEAGGLHIIGTERHESRRIDNQLRGRSGRQGDAGSSRFYLSMEDALMRIFASDRVSGMMRKLGMKPGEAIEHPWVTKAIANAQRKVESRNFDIRKQLLEYDDVANDQRRAIYSQRNELLDVSDVSETINSIREDVFKATIDAYIPPQSLEEMWDIPGLQERLKNDFDLDLPIAEWLDKEPELHEETLRERILAQSIEVYQRKEEVVGAEMMRHFEKGVMLQTLDSLWKEHLAAMDYLRQGIHLRGYAQKDPKQEYKRESFSMFAAMLESLKYEVISTLSKVQVRMPEEVEELEQQRRMEAERLAQMQQLSHQDDDSAAAAALAAQTGERKVGRNDPCPCGSGKKYKQCHGRLQ.

Residues Gln87, 105–109, and Asp512 contribute to the ATP site; that span reads GEGKT. Positions 859–901 are disordered; it reads HQDDDSAAAAALAAQTGERKVGRNDPCPCGSGKKYKQCHGRLQ. Cys885, Cys887, Cys896, and His897 together coordinate Zn(2+). Residues 891–901 show a composition bias toward basic residues; the sequence is KKYKQCHGRLQ.

Belongs to the SecA family. As to quaternary structure, monomer and homodimer. Part of the essential Sec protein translocation apparatus which comprises SecA, SecYEG and auxiliary proteins SecDF-YajC and YidC. Zn(2+) is required as a cofactor.

Its subcellular location is the cell inner membrane. It localises to the cytoplasm. It catalyses the reaction ATP + H2O + cellular proteinSide 1 = ADP + phosphate + cellular proteinSide 2.. In terms of biological role, part of the Sec protein translocase complex. Interacts with the SecYEG preprotein conducting channel. Has a central role in coupling the hydrolysis of ATP to the transfer of proteins into and across the cell membrane, serving both as a receptor for the preprotein-SecB complex and as an ATP-driven molecular motor driving the stepwise translocation of polypeptide chains across the membrane. The protein is Protein translocase subunit SecA of Escherichia coli O9:H4 (strain HS).